Consider the following 451-residue polypeptide: Probable beta-1,4-xylosyltransferase GT43E (451 aa).

At 1–88 the chain is on the cytoplasmic side; that stretch reads MVSSRRNTGG…SKSRGLSCKR (88 aa). The helical; Signal-anchor for type II membrane protein transmembrane segment at 89 to 109 threads the bilayer; sequence LAFHLFVCFMVGIFIGFMPFF. The Lumenal portion of the chain corresponds to 110 to 451; that stretch reads SVDVSQKIVS…KNLDAVIPVT (342 aa). N-linked (GlcNAc...) asparagine glycosylation is found at N260 and N366.

This sequence belongs to the glycosyltransferase 43 family.

Its subcellular location is the golgi apparatus membrane. Functionally, probable beta-1,4-xylosyltransferase involved in xylan biosynthesis in cell walls. In Oryza sativa subsp. japonica (Rice), this protein is Probable beta-1,4-xylosyltransferase GT43E.